The sequence spans 412 residues: Hyaluronidase-3 (412 aa).

The signal sequence occupies residues 1 to 22 (MIMHLGLMMVVGLTLCLMHGQA). Disulfide bonds link Cys42–Cys332, Cys206–Cys221, Cys357–Cys368, Cys362–Cys396, and Cys398–Cys407. A glycan (N-linked (GlcNAc...) asparagine) is linked at Asn69. Glu129 functions as the Proton donor in the catalytic mechanism. Asn216 is a glycosylation site (N-linked (GlcNAc...) asparagine). The 56-residue stretch at 353–408 (AAMACSHQRCHGHGRCARKDPGQMEAFLHLQPDDSLGAWNSFRCHCYSGWAGPTCL) folds into the EGF-like domain.

It belongs to the glycosyl hydrolase 56 family. In terms of processing, N-glycosylated. As to expression, expressed in testis, epididymal tissue, epididymal luminal fluid (ELF), acrosome-intact (AI) sperm and caput (CAP), corpus (COR) and caudal (CAU) sperm. Higher expression in sperm than testis (at protein level). Liver, kidney, skin, brain, stomach and testis. Expressed mainly in granulosa cells of the ovaries. Expressed in small and large antral follicles. Not present in theca or stroma cells. Expressed in testis and liver. Expressed in testis and CAP, COR, and CAU epididymis tissue.

It localises to the secreted. Its subcellular location is the cell membrane. It is found in the cytoplasmic vesicle. The protein resides in the secretory vesicle. The protein localises to the acrosome. It localises to the endoplasmic reticulum. Its subcellular location is the early endosome. The enzyme catalyses Random hydrolysis of (1-&gt;4)-linkages between N-acetyl-beta-D-glucosamine and D-glucuronate residues in hyaluronate.. Functionally, facilitates sperm penetration into the layer of cumulus cells surrounding the egg by digesting hyaluronic acid. Involved in induction of the acrosome reaction in the sperm. Involved in follicular atresia, the breakdown of immature ovarian follicles that are not selected to ovulate. Induces ovarian granulosa cell apoptosis, possibly via apoptotic signaling pathway involving CASP8 and CASP3 activation, and poly(ADP-ribose) polymerase (PARP) cleavage. Has no hyaluronidase activity in embryonic fibroblasts in vitro. Has no hyaluronidase activity in granulosa cells in vitro. The sequence is that of Hyaluronidase-3 (Hyal3) from Mus musculus (Mouse).